A 237-amino-acid chain; its full sequence is DNA repair protein RecO (237 aa).

This sequence belongs to the RecO family.

In terms of biological role, involved in DNA repair and RecF pathway recombination. The sequence is that of DNA repair protein RecO from Rickettsia africae (strain ESF-5).